Consider the following 309-residue polypeptide: Ribonuclease Z (309 aa).

Residues His-63, His-65, Asp-67, His-68, His-145, Asp-216, and His-274 each contribute to the Zn(2+) site. The active-site Proton acceptor is Asp-67.

Belongs to the RNase Z family. As to quaternary structure, homodimer. Zn(2+) is required as a cofactor.

The enzyme catalyses Endonucleolytic cleavage of RNA, removing extra 3' nucleotides from tRNA precursor, generating 3' termini of tRNAs. A 3'-hydroxy group is left at the tRNA terminus and a 5'-phosphoryl group is left at the trailer molecule.. In terms of biological role, zinc phosphodiesterase, which displays some tRNA 3'-processing endonuclease activity. Probably involved in tRNA maturation, by removing a 3'-trailer from precursor tRNA. The sequence is that of Ribonuclease Z from Streptococcus sanguinis (strain SK36).